Reading from the N-terminus, the 630-residue chain is MRRLFAISSTGNRFVHRSLLGKGKCGTAPPSFSHCSFWVRDFSGVRYDYRKISINRLNDLKLDDAVNLFGDMVKSRPFPSIVEFSKLLSAIAKMNKFDLVISLGEQMQNLGISHNLYTYSILINCFCRRSQLSLALAVLAKMMKLGYEPDIVTLNSLLNGFCHGNRISDAVSLVGQMVEMGYQPDSFTFNTLIHGLFRHNRASEAVALVDRMVVKGCQPDLVTYGIVVNGLCKRGDIDLALSLLKKMEQGKIEPGVVIYNTIIDALCNYKNVNDALNLFTEMDNKGIRPNVVTYNSLIRCLCNYGRWSDASRLLSDMIERKINPNVVTFSALIDAFVKEGKLVEAEKLYDEMIKRSIDPDIFTYSSLINGFCMHDRLDEAKHMFELMISKDCFPNVVTYNTLIKGFCKAKRVDEGMELFREMSQRGLVGNTVTYTTLIHGFFQARECDNAQIVFKQMVSDGVLPDIMTYSILLDGLCNNGKVETALVVFEYLQRSKMEPDIYTYNIMIEGMCKAGKVEDGWDLFCSLSLKGVKPNVVTYTTMMSGFCRKGLKEEADALFREMKEEGPLPDSGTYNTLIRAHLRDGDKAASAELIREMRSCRFVGDASTIGLVTNMLHDGRLDKSFLKMLS.

The N-terminal 22 residues, 1 to 22, are a transit peptide targeting the mitochondrion; sequence MRRLFAISSTGNRFVHRSLLGK. PPR repeat units lie at residues 80 to 114, 115 to 149, 150 to 184, 185 to 219, 220 to 254, 255 to 289, 290 to 324, 325 to 359, 360 to 394, 395 to 429, 430 to 464, 465 to 499, 500 to 534, 535 to 569, and 570 to 604; these read SIVE…GISH, NLYT…GYEP, DIVT…GYQP, DSFT…GCQP, DLVT…KIEP, GVVI…GIRP, NVVT…KINP, NVVT…SIDP, DIFT…DCFP, NVVT…GLVG, NTVT…GVLP, DIMT…KMEP, DIYT…GVKP, NVVT…GPLP, and DSGT…RFVG.

It belongs to the PPR family. P subfamily.

Its subcellular location is the mitochondrion. This Arabidopsis thaliana (Mouse-ear cress) protein is Pentatricopeptide repeat-containing protein At1g63130, mitochondrial.